The primary structure comprises 552 residues: Hyaluronan synthase 2 (552 aa).

At 1-11 (MHCERFLCILR) the chain is on the cytoplasmic side. Residues 12–32 (IIGTTLFGVSLLLGITAAYIV) form a helical membrane-spanning segment. Topologically, residues 33 to 45 (GYQFIQTDNYYFS) are extracellular. The chain crosses the membrane as a helical span at residues 46–66 (FGLYGAFLASHLIIQSLFAFL). Residues 67 to 374 (EHRKMKKSLE…NAMWFHKHHL (308 aa)) are Cytoplasmic-facing. Phosphothreonine is present on threonine 110. Lysine 190 is covalently cross-linked (Glycyl lysine isopeptide (Lys-Gly) (interchain with G-Cter in ubiquitin)). A glycan (O-linked (GlcNAc) serine) is linked at serine 221. Residue threonine 328 is modified to Phosphothreonine. The chain crosses the membrane as a helical span at residues 375–395 (WMTYEAVITGFFPFFLIATVI). At 396 to 402 (QLFYRGK) the chain is on the extracellular side. Residues 403 to 423 (IWNTLLFLLTVQLVGLIKSSF) form a helical membrane-spanning segment. Topologically, residues 424 to 429 (ASCLRG) are cytoplasmic. Residues 430-450 (NIVMVFMSLYSVLYMSSLLPA) form a helical membrane-spanning segment. Over 451–475 (KMFAIATINKAGWGTSGRKTIVVNF) the chain is Extracellular. The helical transmembrane segment at 476 to 496 (IGLIPVSVWFTILLGGVIFTI) threads the bilayer. The Cytoplasmic portion of the chain corresponds to 497 to 510 (YKESKKPFSESKQT). A helical membrane pass occupies residues 511–531 (VLIVGTLLYACYWVMLLTLYV). Over 532–552 (VLINKCGRRKKGQQYDMVLDV) the chain is Extracellular.

It belongs to the NodC/HAS family. In terms of assembly, homodimer; dimerization promotes enzymatic activity. Forms heterodimer with HAS3. Forms heterodimer with HAS1. Requires Mg(2+) as cofactor. Phosphorylation at Thr-328 is essential for hyaluronan synthase activity. In terms of processing, O-GlcNAcylation at Ser-221 increases the stability of HAS2 and plasma membrane localization. Post-translationally, ubiquitination at Lys-190; this ubiquitination is essential for hyaluronan synthase activity and homo- or hetero-oligomerization. Can also be poly-ubiquitinated. Deubiquitinated by USP17 and USP4. USP17 efficiently removes 'Lys-63'- and 'Lys-48'-linked polyubiquitin chains, whereas USP4 preferentially removes monoubiquitination and, partially, both 'Lys-63'- and 'Lys-48'-linked polyubiquitin chain. Expressed in corneal endothelial cells.

The protein resides in the cell membrane. Its subcellular location is the endoplasmic reticulum membrane. The protein localises to the vesicle. It is found in the golgi apparatus membrane. It localises to the lysosome. It catalyses the reaction [hyaluronan](n) + UDP-N-acetyl-alpha-D-glucosamine = N-acetyl-beta-D-glucosaminyl-(1-&gt;4)-[hyaluronan](n) + UDP + H(+). The enzyme catalyses N-acetyl-beta-D-glucosaminyl-(1-&gt;4)-[hyaluronan](n) + UDP-alpha-D-glucuronate = [hyaluronan](n+1) + UDP + H(+). The protein operates within glycan biosynthesis; hyaluronan biosynthesis. Functionally, catalyzes the addition of GlcNAc or GlcUA monosaccharides to the nascent hyaluronan polymer. Therefore, it is essential to hyaluronan synthesis a major component of most extracellular matrices that has a structural role in tissues architectures and regulates cell adhesion, migration and differentiation. This is one of three isoenzymes responsible for cellular hyaluronan synthesis and it is particularly responsible for the synthesis of high molecular mass hyaluronan. The polypeptide is Hyaluronan synthase 2 (HAS2) (Bos taurus (Bovine)).